The sequence spans 278 residues: MSEQAKVGLGLRREMLDEFCDSTPDAIDFFEVAPENWMTLGGKFGRQFKQLTERKPFFCHGLSLSIGGPSPLDIQFVKDIKAFMDLHNISTYSEHLSYCSGTGHMYDLMPIPFTQEAVMHVVKRVKQVEDILERPLILENVSFYAAPGAEMTEFEFVNAVLSEADCRLLLDVNNIYVNSVNHHYDASQFLGSMPTERIAYLHIAGHYEEAEDLIVDTHGADIISPVWQLLRECYEIHGVHPTLLERDFNIPPTSELLNEIDQIHEYQHAVPSLLSRSA.

It belongs to the UPF0276 family.

In Shewanella sediminis (strain HAW-EB3), this protein is UPF0276 protein Ssed_2857.